A 133-amino-acid chain; its full sequence is MQRVTITLDDDLLETLDNLSQRRGYNNRSEAIRDILRGALAQESTQQHGTEGFAVLSYVYEHEKRDLASRIVSTQHHHHDLSVATLHVHINHDDCLEIAVLKGDMGDVQHFADDVISQRGVRHGHLQCLPKED.

Ni(2+)-binding residues include His76, His87, His89, and Cys95.

It belongs to the transcriptional regulatory CopG/NikR family. As to quaternary structure, homotetramer. Ni(2+) serves as cofactor.

Functionally, transcriptional repressor of the nikABCDE operon. Is active in the presence of excessive concentrations of intracellular nickel. The sequence is that of Nickel-responsive regulator from Escherichia fergusonii (strain ATCC 35469 / DSM 13698 / CCUG 18766 / IAM 14443 / JCM 21226 / LMG 7866 / NBRC 102419 / NCTC 12128 / CDC 0568-73).